A 379-amino-acid polypeptide reads, in one-letter code: Chaperone protein DnaJ (379 aa).

The J domain maps to 5–70 (DYYEILGLDK…QKKAQYDQFG (66 aa)). A CR-type zinc finger spans residues 135 to 217 (GVEKEISVTR…CRGKGIVRKH (83 aa)). Zn(2+) contacts are provided by Cys-148, Cys-151, Cys-165, Cys-168, Cys-191, Cys-194, Cys-205, and Cys-208. CXXCXGXG motif repeat units follow at residues 148-155 (CETCNGTG), 165-172 (CDKCNGTG), 191-198 (CDKCGGRG), and 205-212 (CEECRGKG).

This sequence belongs to the DnaJ family. Homodimer. It depends on Zn(2+) as a cofactor.

The protein localises to the cytoplasm. Functionally, participates actively in the response to hyperosmotic and heat shock by preventing the aggregation of stress-denatured proteins and by disaggregating proteins, also in an autonomous, DnaK-independent fashion. Unfolded proteins bind initially to DnaJ; upon interaction with the DnaJ-bound protein, DnaK hydrolyzes its bound ATP, resulting in the formation of a stable complex. GrpE releases ADP from DnaK; ATP binding to DnaK triggers the release of the substrate protein, thus completing the reaction cycle. Several rounds of ATP-dependent interactions between DnaJ, DnaK and GrpE are required for fully efficient folding. Also involved, together with DnaK and GrpE, in the DNA replication of plasmids through activation of initiation proteins. The polypeptide is Chaperone protein DnaJ (Clostridium kluyveri (strain ATCC 8527 / DSM 555 / NBRC 12016 / NCIMB 10680 / K1)).